A 280-amino-acid chain; its full sequence is uncharacterized protein (280 aa).

The next 3 helical transmembrane spans lie at 10 to 29, 164 to 186, and 209 to 228; these read IQQN…LLFN, FVFV…FAFI, and IFGL…YFLL.

The protein localises to the cell membrane. This is an uncharacterized protein from Bacillus subtilis (strain 168).